Here is a 136-residue protein sequence, read N- to C-terminus: Gilles de la Tourette syndrome chromosomal region candidate gene 1 protein (136 aa).

A helical membrane pass occupies residues 73–93 (AICMEVFLFLWFIAPIYACVC).

Its subcellular location is the membrane. This is Gilles de la Tourette syndrome chromosomal region candidate gene 1 protein (GTSCR1) from Homo sapiens (Human).